Reading from the N-terminus, the 375-residue chain is Dehydrodolichyl diphosphate synthase complex subunit NUS1 (375 aa).

Residues 1–28 (MPTMIKKDDKAMEPPNEKPHRKIERDDV) show a composition bias toward basic and acidic residues. The segment at 1 to 48 (MPTMIKKDDKAMEPPNEKPHRKIERDDVPESSNHIPPPESGVLKGGKV) is disordered. The chain crosses the membrane as a helical span at residues 97 to 119 (YLFYKFLLVLLYICFGLFRYGQY).

It belongs to the UPP synthase family. Forms an active dehydrodolichyl diphosphate synthase complex with either SRT1 or RER2. Requires Mg(2+) as cofactor.

It localises to the endoplasmic reticulum membrane. It is found in the lipid droplet. The protein resides in the nucleus membrane. It catalyses the reaction n isopentenyl diphosphate + (2E,6E)-farnesyl diphosphate = a di-trans,poly-cis-polyprenyl diphosphate + n diphosphate. Its pathway is protein modification; protein glycosylation. Functionally, with SRT1 or RER2, forms the dehydrodolichyl diphosphate synthase (DDS) complex, an essential component of the dolichol monophosphate (Dol-P) biosynthetic machinery. Adds multiple copies of isopentenyl pyrophosphate (IPP) to farnesyl pyrophosphate (FPP) to produce dehydrodolichyl diphosphate (Dedol-PP), a precursor of dolichol which is utilized as a sugar carrier in protein glycosylation in the endoplasmic reticulum (ER). The chain is Dehydrodolichyl diphosphate synthase complex subunit NUS1 (NUS1) from Saccharomyces cerevisiae (strain ATCC 204508 / S288c) (Baker's yeast).